We begin with the raw amino-acid sequence, 1453 residues long: Scavenger receptor cysteine-rich type 1 protein M160 (1453 aa).

An N-terminal signal peptide occupies residues 1–40 (MMLPQNSWHIDFGRCCCHQNLFSAVVTCILLLNSCFLISS). At 41–1359 (FNGTDLELRL…LKSLNASSGH (1319 aa)) the chain is on the extracellular side. N-linked (GlcNAc...) asparagine glycosylation is found at Asn42, Asn78, Asn120, and Asn161. 9 SRCR domains span residues 48 to 148 (LRLV…VNCY), 155 to 255 (LRLV…LTCY), 262 to 362 (LRLV…VICS), 369 to 469 (LRLA…VICS), 476 to 576 (LRLV…VTCS), 583 to 683 (LRLV…VICS), 690 to 790 (LRLV…LICS), 795 to 895 (PRLV…VVCS), and 900 to 1000 (VRLV…VICT). Disulfide bonds link Cys73/Cys137, Cys86/Cys147, and Cys117/Cys127. Intrachain disulfides connect Cys180–Cys244, Cys193–Cys254, Cys224–Cys234, Cys287–Cys351, Cys300–Cys361, and Cys331–Cys341. Residues Asn334, Asn377, Asn441, Asn548, and Asn637 are each glycosylated (N-linked (GlcNAc...) asparagine). Intrachain disulfides connect Cys394–Cys458, Cys407–Cys468, Cys438–Cys448, Cys501–Cys565, Cys514–Cys575, Cys545–Cys555, Cys608–Cys672, Cys621–Cys682, Cys652–Cys662, Cys715–Cys779, Cys728–Cys789, Cys759–Cys769, Cys820–Cys884, Cys833–Cys894, Cys864–Cys874, Cys925–Cys989, Cys938–Cys999, and Cys969–Cys979. Asn972, Asn1013, Asn1084, and Asn1104 each carry an N-linked (GlcNAc...) asparagine glycan. 3 SRCR domains span residues 1036-1136 (LRLV…VICS), 1141-1243 (LRLY…ITCE), and 1246-1346 (IRVR…VRCS). Disulfide bonds link Cys1061/Cys1125, Cys1074/Cys1135, and Cys1105/Cys1115. Residues Asn1161 and Asn1171 are each glycosylated (N-linked (GlcNAc...) asparagine). 5 disulfide bridges follow: Cys1181/Cys1242, Cys1212/Cys1222, Cys1271/Cys1335, Cys1284/Cys1345, and Cys1315/Cys1325. Residues Asn1318 and Asn1354 are each glycosylated (N-linked (GlcNAc...) asparagine). A helical membrane pass occupies residues 1360–1380 (LALILSSIFGLLLLVLFILFL). Over 1381 to 1453 (TWCRVQKQKH…GVLPASEATK (73 aa)) the chain is Cytoplasmic. The span at 1418–1435 (EDPHGTRTSDDTPNHGCE) shows a compositional bias: basic and acidic residues. The tract at residues 1418–1453 (EDPHGTRTSDDTPNHGCEDASDTSLLGVLPASEATK) is disordered.

As to expression, isoform 1 is highly expressed in the spleen, lymph nodes, thymus, and fetal liver and weakly expressed in bone marrow and no expression was found in peripheral blood leukocytes. Isoform 1 expression is restricted to the monocyte and macrophage cell lines. Isoform 2 is only expressed in spleen.

The protein localises to the cell membrane. The protein resides in the secreted. The sequence is that of Scavenger receptor cysteine-rich type 1 protein M160 (CD163L1) from Homo sapiens (Human).